A 107-amino-acid chain; its full sequence is uncharacterized protein (107 aa).

It is found in the mitochondrion. This is an uncharacterized protein from Arabidopsis thaliana (Mouse-ear cress).